Consider the following 90-residue polypeptide: Small ribosomal subunit protein bS16 (90 aa).

This sequence belongs to the bacterial ribosomal protein bS16 family.

This chain is Small ribosomal subunit protein bS16, found in Clostridioides difficile (strain 630) (Peptoclostridium difficile).